A 1007-amino-acid polypeptide reads, in one-letter code: RNA-binding protein 26 (1007 aa).

Lys94 participates in a covalent cross-link: Glycyl lysine isopeptide (Lys-Gly) (interchain with G-Cter in SUMO2). Residue Lys106 forms a Glycyl lysine isopeptide (Lys-Gly) (interchain with G-Cter in SUMO1); alternate linkage. Residue Lys106 forms a Glycyl lysine isopeptide (Lys-Gly) (interchain with G-Cter in SUMO2); alternate linkage. A compositionally biased stretch (basic and acidic residues) spans 106 to 118 (KKEEITKEEEREK). Residues 106–241 (KKEEITKEEE…YTPVSSVPSI (136 aa)) form a disordered region. Position 127 is a phosphoserine (Ser127). Basic and acidic residues predominate over residues 134–168 (RYRENRSRDERKKDDRSRKRDYDRNPPRRDSYRDR). The span at 169–186 (YNRRRGRSRSYSRSRSRS) shows a compositional bias: basic residues. 2 stretches are compositionally biased toward basic and acidic residues: residues 187–201 (WSKERLRERDRDRSR) and 209–227 (RSRERDLVKPKYDLDRTDP). The span at 228 to 241 (LENNYTPVSSVPSI) shows a compositional bias: polar residues. The C3H1-type zinc-finger motif lies at 288 to 316 (PMPKKRCRDYDEKGFCMRGDMCPFDHGSD). Positions 334 to 388 (QPPVVEGPPPPGLPPPPPILTPPPVNLRPPVPPPGPLPPSLPPVTGPPPPLPPLQ) are enriched in pro residues. Disordered regions lie at residues 334-404 (QPPV…SSVP) and 460-519 (IGLT…TNSP). Residues 394–404 (APPNSATSSVP) are compositionally biased toward low complexity. At Ser496 the chain carries Phosphoserine. Position 510 is an N6-acetyllysine (Lys510). Ser518 carries the phosphoserine modification. Residues 532–606 (TKLELRKVPP…RFIKVYWHRE (75 aa)) form the RRM 1 domain. The residue at position 616 (Ser616) is a Phosphoserine. Coiled-coil stretches lie at residues 719–795 (DNNE…KAAS) and 823–847 (KKMQAGEEVTELRRKYTELQLEAAK). The interval 853 to 884 (SGRGRGIHSRGRGAVHGRGRGRGRGRGVPGHA) is disordered. The segment covering 857–877 (RGIHSRGRGAVHGRGRGRGRG) has biased composition (basic residues). In terms of domain architecture, RRM 2 spans 891 to 960 (RALEISAFTE…QDLKLAWNKP (70 aa)). The tract at residues 966–1007 (AVETEEVEPDEEEFQEESLVDDSLLQDDDEEEEDNESRSWRR) is disordered. Acidic residues predominate over residues 968–1000 (ETEEVEPDEEEFQEESLVDDSLLQDDDEEEEDN).

Functionally, may be involved in the turnover of nuclear polyadenylated (pA+) RNA. In Homo sapiens (Human), this protein is RNA-binding protein 26.